Here is a 392-residue protein sequence, read N- to C-terminus: Phosphoglycerate kinase (392 aa).

Substrate-binding positions include 21–23, Arg-36, 59–62, Arg-113, and Arg-146; these read DLN and HLGR. ATP is bound by residues Lys-197, Glu-319, and 345 to 348; that span reads GGDT.

This sequence belongs to the phosphoglycerate kinase family. Monomer.

The protein resides in the cytoplasm. The catalysed reaction is (2R)-3-phosphoglycerate + ATP = (2R)-3-phospho-glyceroyl phosphate + ADP. It functions in the pathway carbohydrate degradation; glycolysis; pyruvate from D-glyceraldehyde 3-phosphate: step 2/5. In Alkalilimnicola ehrlichii (strain ATCC BAA-1101 / DSM 17681 / MLHE-1), this protein is Phosphoglycerate kinase.